The following is a 202-amino-acid chain: uncharacterized protein (202 aa).

Lysine 136 is covalently cross-linked (Isoglutamyl lysine isopeptide (Lys-Gln) (interchain with Q-Cter in protein Pup)).

This is an uncharacterized protein from Mycobacterium tuberculosis (strain CDC 1551 / Oshkosh).